The chain runs to 106 residues: Large ribosomal subunit protein uL24 (106 aa).

Residues 1–20 (MNKRAKSKNREPLRKSPVKR) are disordered. Over residues 8 to 20 (KNREPLRKSPVKR) the composition is skewed to basic and acidic residues.

Belongs to the universal ribosomal protein uL24 family. As to quaternary structure, part of the 50S ribosomal subunit.

In terms of biological role, one of two assembly initiator proteins, it binds directly to the 5'-end of the 23S rRNA, where it nucleates assembly of the 50S subunit. Functionally, one of the proteins that surrounds the polypeptide exit tunnel on the outside of the subunit. This Methylacidiphilum infernorum (isolate V4) (Methylokorus infernorum (strain V4)) protein is Large ribosomal subunit protein uL24.